The primary structure comprises 78 residues: Toxin-like protein 10 (78 aa).

The N-terminal stretch at 1–23 is a signal peptide; sequence MKATALLIAVFILFSVFGDMGYC.

In terms of processing, contains 4 disulfide bonds. As to expression, expressed by the venom gland.

It localises to the secreted. This chain is Toxin-like protein 10, found in Urodacus yaschenkoi (Inland robust scorpion).